A 373-amino-acid chain; its full sequence is Centrosomal protein of 41 kDa (373 aa).

Residues Q89–S137 are disordered. A phosphoserine mark is found at S96 and S99. Positions T106–N127 are enriched in polar residues. The residue at position 109 (T109) is a Phosphothreonine. At S121 the chain carries Phosphoserine. The Rhodanese domain maps to P169 to I266. Residues Q275 to K373 form a disordered region. A compositionally biased stretch (basic and acidic residues) spans N298–Y312. R343 is subject to Omega-N-methylarginine. Polar residues predominate over residues S355–H366.

It belongs to the CEP41 family. In terms of assembly, found in a complex with TTLL6. Expressed in testis and fetal tissues.

Its subcellular location is the cytoplasm. It is found in the cytoskeleton. The protein localises to the microtubule organizing center. The protein resides in the centrosome. It localises to the cell projection. Its subcellular location is the cilium. It is found in the cilium basal body. Functionally, required during ciliogenesis for tubulin glutamylation in cilium. Probably acts by participating in the transport of TTLL6, a tubulin polyglutamylase, between the basal body and the cilium. In Homo sapiens (Human), this protein is Centrosomal protein of 41 kDa (CEP41).